The sequence spans 324 residues: Phospho-N-acetylmuramoyl-pentapeptide-transferase (324 aa).

The next 10 membrane-spanning stretches (helical) occupy residues 9 to 29 (TFAV…PFLV), 53 to 73 (TMGA…FSFI), 77 to 97 (VSAA…LGFL), 117 to 137 (FLGQ…SDFA), 149 to 169 (IDLG…FSNA), 176 to 196 (LDGL…VIAF), 201 to 221 (MDVA…LLFN), 227 to 247 (IFMG…VSIL), 253 to 273 (LLLL…LQVF), and 304 to 324 (VLTF…VVIF).

Belongs to the glycosyltransferase 4 family. MraY subfamily. The cofactor is Mg(2+).

Its subcellular location is the cell membrane. The catalysed reaction is UDP-N-acetyl-alpha-D-muramoyl-L-alanyl-gamma-D-glutamyl-meso-2,6-diaminopimeloyl-D-alanyl-D-alanine + di-trans,octa-cis-undecaprenyl phosphate = di-trans,octa-cis-undecaprenyl diphospho-N-acetyl-alpha-D-muramoyl-L-alanyl-D-glutamyl-meso-2,6-diaminopimeloyl-D-alanyl-D-alanine + UMP. It participates in cell wall biogenesis; peptidoglycan biosynthesis. Its function is as follows. Catalyzes the initial step of the lipid cycle reactions in the biosynthesis of the cell wall peptidoglycan: transfers peptidoglycan precursor phospho-MurNAc-pentapeptide from UDP-MurNAc-pentapeptide onto the lipid carrier undecaprenyl phosphate, yielding undecaprenyl-pyrophosphoryl-MurNAc-pentapeptide, known as lipid I. The protein is Phospho-N-acetylmuramoyl-pentapeptide-transferase of Listeria innocua serovar 6a (strain ATCC BAA-680 / CLIP 11262).